We begin with the raw amino-acid sequence, 1041 residues long: FHIP family protein CG3558 (1041 aa).

Position 490 is a phosphoserine (S490). Disordered regions lie at residues 619 to 648 (RPADEESEATDTTVATTASEADMDHNSSSL), 792 to 818 (KGNEGSPMHHSQQQQMVTNSGQQQGQL), 858 to 879 (SMFSRKSASTSTAPPNGSSASS), 903 to 947 (DGRG…SNSS), and 959 to 986 (SNTTTHSASTLHGLDGGPSTGGFNSEPA). The span at 628-637 (TDTTVATTAS) shows a compositional bias: polar residues. S797 carries the post-translational modification Phosphoserine. The span at 800–818 (HHSQQQQMVTNSGQQQGQL) shows a compositional bias: polar residues. A compositionally biased stretch (polar residues) spans 903 to 925 (DGRGISQAQTSAGTCETSLSTQP). Positions 927–947 (AGASRTGANATSTAASGSNSS) are enriched in low complexity. A compositionally biased stretch (polar residues) spans 959-968 (SNTTTHSAST).

The protein belongs to the FHIP family.

This is FHIP family protein CG3558 from Drosophila melanogaster (Fruit fly).